Reading from the N-terminus, the 40-residue chain is MKVRTSLRSLKQIPGSQVVRRRGKTYVINKKNPRMKARQG.

This sequence belongs to the bacterial ribosomal protein bL36 family.

This is Large ribosomal subunit protein bL36B from Kocuria rhizophila (strain ATCC 9341 / DSM 348 / NBRC 103217 / DC2201).